A 347-amino-acid polypeptide reads, in one-letter code: Fatty acid elongase 2 (347 aa).

Residues 1-62 lie on the Lumenal side of the membrane; it reads MNSLVTQYAA…PSEFQFIAGE (62 aa). Residue N32 is glycosylated (N-linked (GlcNAc...) asparagine). The helical transmembrane segment at 63-83 threads the bilayer; that stretch reads LPLSTLPPVLYAITAYYVIIF. Residues 84–96 are Cytoplasmic-facing; the sequence is GGRFLLSKSKPFK. The chain crosses the membrane as a helical span at residues 97 to 119; the sequence is LNGLFQLHNLVLTSLSLTLLLLM. Residues 120–122 are Lumenal-facing; that stretch reads VEQ. Residues 123-142 form a helical membrane-spanning segment; sequence LVPIIVQHGLYFAICNIGAW. Topologically, residues 143–146 are cytoplasmic; sequence TQPL. Residues 147–169 traverse the membrane as a helical segment; that stretch reads VTLYYMNYIVKFIEFIDTFFLVL. The Lumenal portion of the chain corresponds to 170 to 200; the sequence is KHKKLTFLHTYHHGATALLCYTQLMGTTSIS. The HxxHH motif motif lies at 178 to 182; it reads HTYHH. The helical transmembrane segment at 201–221 threads the bilayer; the sequence is WVPISLNLGVHVVMYWYYFLA. Over 222 to 231 the chain is Cytoplasmic; that stretch reads ARGIRVWWKE. A helical transmembrane segment spans residues 232-254; the sequence is WVTRFQIIQFVLDIGFIYFAVYQ. Over 255–275 the chain is Lumenal; it reads KAVHLYFPILPHCGDCVGSTT. Residues 276–296 form a helical membrane-spanning segment; that stretch reads ATFAGCAIISSYLVLFISFYI. Topologically, residues 297–347 are cytoplasmic; it reads NVYKRKGTKTSRVVKRAHGGVAAKVNEYVNVDLKNVPTPSPSPKPQHRRKR. Residue T334 is modified to Phosphothreonine. A phosphoserine mark is found at S336 and S338. Residues 344 to 347 carry the Di-lysine-like motif motif; it reads RRKR.

This sequence belongs to the ELO family.

The protein localises to the endoplasmic reticulum membrane. It carries out the reaction a very-long-chain acyl-CoA + malonyl-CoA + H(+) = a very-long-chain 3-oxoacyl-CoA + CO2 + CoA. It catalyses the reaction octadecanoyl-CoA + malonyl-CoA + H(+) = 3-oxoeicosanoyl-CoA + CO2 + CoA. The catalysed reaction is hexadecanoyl-CoA + malonyl-CoA + H(+) = 3-oxooctadecanoyl-CoA + CO2 + CoA. The enzyme catalyses eicosanoyl-CoA + malonyl-CoA + H(+) = 3-oxodocosanoyl-CoA + CO2 + CoA. It carries out the reaction docosanoyl-CoA + malonyl-CoA + H(+) = 3-oxotetracosanoyl-CoA + CO2 + CoA. In terms of biological role, component of a microsomal membrane-bound long-chain fatty acid elongation system, which produces the 20-26-carbon very long-chain fatty acids (VLCFA) from long-chain fatty acid precursors and is involved ceramide and inositol sphingolipid biosynthesis. Component of elongase II, which elongates 16-18 carbon fatty acyl-CoAs such as palmitoyl-CoA and stearoyl-CoA to 20-22-carbon fatty acids by incorporation of malonyl-CoA. Involved in the synthesis of 1,3-beta-glucan. The enzymes active site faces the cytosol, whereas VLCFA length is determined by a lysine near the luminal end of transmembrane helix 6. Plays an important role in lipotoxic cell death induced by oleic acid through maintaining a balanced fatty acid composition in thr plasma membrane. This Saccharomyces cerevisiae (strain ATCC 204508 / S288c) (Baker's yeast) protein is Fatty acid elongase 2.